Reading from the N-terminus, the 222-residue chain is Glutathione S-transferase alpha-4 (222 aa).

M1 carries the N-acetylmethionine modification. The GST N-terminal domain occupies 3 to 83 (VKPKLYYFQG…YLAAKYNLYG (81 aa)). Residues Y9, 54-55 (QV), and 67-68 (QT) each bind glutathione. In terms of domain architecture, GST C-terminal spans 85 to 208 (DLKERVRIDM…QPGSQRKPPP (124 aa)).

The protein belongs to the GST superfamily. Alpha family. Homodimer.

It localises to the cytoplasm. It catalyses the reaction RX + glutathione = an S-substituted glutathione + a halide anion + H(+). In terms of biological role, conjugation of reduced glutathione to a wide number of exogenous and endogenous hydrophobic electrophiles. The sequence is that of Glutathione S-transferase alpha-4 (Gsta4) from Rattus norvegicus (Rat).